The chain runs to 124 residues: Fluoride-specific ion channel FluC (124 aa).

4 helical membrane passes run 5-25 (VYIA…SGFV), 32-52 (SFPY…GLIM), 67-87 (FAIT…SFET), and 96-116 (LLIA…CTWI). Residues glycine 75 and threonine 78 each coordinate Na(+).

The protein belongs to the fluoride channel Fluc/FEX (TC 1.A.43) family.

The protein localises to the cell inner membrane. It carries out the reaction fluoride(in) = fluoride(out). With respect to regulation, na(+) is not transported, but it plays an essential structural role and its presence is essential for fluoride channel function. Functionally, fluoride-specific ion channel. Important for reducing fluoride concentration in the cell, thus reducing its toxicity. The chain is Fluoride-specific ion channel FluC from Citrifermentans bemidjiense (strain ATCC BAA-1014 / DSM 16622 / JCM 12645 / Bem) (Geobacter bemidjiensis).